A 296-amino-acid polypeptide reads, in one-letter code: Cytidine deaminase (296 aa).

2 CMP/dCMP-type deaminase domains span residues 48–168 (DVDA…FGPV) and 187–296 (QNVN…FIEE). 89–91 (NME) contributes to the substrate binding site. His-102 serves as a coordination point for Zn(2+). The active-site Proton donor is Glu-104. Positions 129 and 132 each coordinate Zn(2+).

This sequence belongs to the cytidine and deoxycytidylate deaminase family. As to quaternary structure, homodimer. It depends on Zn(2+) as a cofactor.

The catalysed reaction is cytidine + H2O + H(+) = uridine + NH4(+). The enzyme catalyses 2'-deoxycytidine + H2O + H(+) = 2'-deoxyuridine + NH4(+). Functionally, this enzyme scavenges exogenous and endogenous cytidine and 2'-deoxycytidine for UMP synthesis. This is Cytidine deaminase from Pectobacterium atrosepticum (strain SCRI 1043 / ATCC BAA-672) (Erwinia carotovora subsp. atroseptica).